A 342-amino-acid polypeptide reads, in one-letter code: Cystein proteinase inhibitor protein salarin (342 aa).

A signal peptide spans 1 to 19 (MKSLVLLLLVAVTVSSVVS). N-linked (GlcNAc) asparagine glycosylation is present at Asn-153. An O-linked (GlcNAc) threonine glycan is attached at Thr-184.

Post-translationally, N-glycosylated, with sialylated biantennary complex-type glycans. In terms of processing, O-glycosylated, with sialylated oligosaccharides. In terms of tissue distribution, expressed in the skin, liver. intestine, spleen, pancreas and kidney.

The protein localises to the cytoplasm. It is found in the vacuole. Its function is as follows. Inhibits papain and ficin (cysteine proteinases) but not trypsin (a serine proteinase). The chain is Cystein proteinase inhibitor protein salarin (salarin) from Salmo salar (Atlantic salmon).